The chain runs to 320 residues: Chitinase 3 (320 aa).

The N-terminal stretch at 1-18 (MRALALAVVAMAVVAVRG) is a signal peptide. Residues 19 to 59 (EQCGSQAGGALCPNCLCCSQYGWCGSTSDYCGAGCQSQCSG) form the Chitin-binding type-1 domain. Cystine bridges form between C21-C36, C30-C42, C33-C61, C35-C49, C53-C57, C97-C159, C172-C180, and C279-C311. E141 (proton donor) is an active-site residue.

The protein belongs to the glycosyl hydrolase 19 family. Chitinase class I subfamily. As to expression, expressed at low levels in roots, leaves, sheaths and meristems.

It carries out the reaction Random endo-hydrolysis of N-acetyl-beta-D-glucosaminide (1-&gt;4)-beta-linkages in chitin and chitodextrins.. Functionally, hydrolyzes chitin and plays a role in defense against fungal pathogens containing chitin. Inhibits the growth of T.reesei fungus on plate assay. This is Chitinase 3 (Cht3) from Oryza sativa subsp. japonica (Rice).